The primary structure comprises 402 residues: B3 domain-containing protein Os01g0723500 (402 aa).

Residues 18–121 (RPHFFKVLVG…RFTAMVFDRT (104 aa)) constitute a DNA-binding region (TF-B3 1). The disordered stretch occupies residues 126 to 203 (EDLMGGGGGD…VKNEEDADEL (78 aa)). The segment covering 152 to 162 (DAARPKKDSVG) has biased composition (basic and acidic residues). Over residues 173-186 (SGGQPLQIVDSSWT) the composition is skewed to polar residues. Residues 289 to 381 (CVIRMSTMHV…EFRVHIFRVV (93 aa)) constitute a DNA-binding region (TF-B3 2).

It is found in the nucleus. The chain is B3 domain-containing protein Os01g0723500 from Oryza sativa subsp. japonica (Rice).